Consider the following 446-residue polypeptide: Serine decarboxylase 3 (446 aa).

Histidine 162 lines the substrate pocket. The residue at position 274 (lysine 274) is an N6-(pyridoxal phosphate)lysine.

This sequence belongs to the group II decarboxylase family. Pyridoxal 5'-phosphate serves as cofactor.

The catalysed reaction is L-serine + H(+) = ethanolamine + CO2. Its function is as follows. Catalyzes the biosynthesis of ethanolamine from serine. Decarboxylation of free serine is the major source of ethanolamine production in plants and ethanolamine metabolism is crucial for the synthesis of choline, phosphatidylethanolamine (PE) and phosphatidylcholine (PC), and thus for plant growth. In Oryza sativa subsp. japonica (Rice), this protein is Serine decarboxylase 3.